The chain runs to 365 residues: F-box protein At1g48060 (365 aa).

The segment at 1–20 is disordered; the sequence is MKPQEEEEKNENMARKRSKS. Residues 20–69 form the F-box domain; the sequence is SSSSLSIPLDIATDIFLRLPAKSVVRFSCVAKHWSSITTAPYFTNSFETR.

In Arabidopsis thaliana (Mouse-ear cress), this protein is F-box protein At1g48060.